Consider the following 76-residue polypeptide: Omega-conotoxin-like TxMKLT1-0211 (76 aa).

Residues 1–22 (MKLTCMMIVAVLFLTAWTFVTA) form the signal peptide. Residues 23–52 (VPHSSNALENLYLKAHHEMNNPEDSELNKR) constitute a propeptide that is removed on maturation. Disulfide bonds link cysteine 53-cysteine 67, cysteine 60-cysteine 71, and cysteine 66-cysteine 75.

This sequence belongs to the conotoxin O1 superfamily. As to expression, expressed by the venom duct.

The protein resides in the secreted. In terms of biological role, omega-conotoxins act at presynaptic membranes, they bind and block voltage-gated calcium channels (Cav). The protein is Omega-conotoxin-like TxMKLT1-0211 of Conus textile (Cloth-of-gold cone).